Here is a 1384-residue protein sequence, read N- to C-terminus: DNA-directed RNA polymerase subunit beta (1384 aa).

The protein belongs to the RNA polymerase beta chain family. In terms of assembly, the RNAP catalytic core consists of 2 alpha, 1 beta, 1 beta' and 1 omega subunit. When a sigma factor is associated with the core the holoenzyme is formed, which can initiate transcription.

The catalysed reaction is RNA(n) + a ribonucleoside 5'-triphosphate = RNA(n+1) + diphosphate. In terms of biological role, DNA-dependent RNA polymerase catalyzes the transcription of DNA into RNA using the four ribonucleoside triphosphates as substrates. This chain is DNA-directed RNA polymerase subunit beta, found in Stenotrophomonas maltophilia (strain R551-3).